The primary structure comprises 396 residues: MAVQESAAQLSMTLKVQEYPTLKVPYETLNKRFRAAQKNIDRETSHVTMVVAELEKTLSSCPAVDSVVSLLDGVVEKLSVLKRKAVESIQAEDESAKLCKRRIEHLKEHSSDQPAAASMWKRKRMDRMMVEHLLRCGYYNTAVKLARQSGIEDLVNIEMFLTAKEVEESLERRETATCLAWCHDNKSRLRKMKSCLEFSLRIQEFIELVRQNKRLDAVRHARKHFSQAEGSQLDEVRQVMGMLAFPPDTHISPYKDLLDPARWRMLIQQFRYDNYRLHQLGNSSVFTLTLQAGLSAIKTPQCYKEDGSSKSPDCPVCSRSLNKLAQPLPMAHCANSRLVCKISGDVMNENNPPMMLPNGYVYGYNSLLSIRQDDKVVCPRTKEVFHFSQAEKVYIM.

The tract at residues 1-124 (MAVQESAAQL…AAASMWKRKR (124 aa)) is extracellular and involved in cell to cell contact. Thr-28 is modified (phosphothreonine). The LisH domain maps to 121 to 153 (KRKRMDRMMVEHLLRCGYYNTAVKLARQSGIED). Residues 159–216 (MFLTAKEVEESLERRETATCLAWCHDNKSRLRKMKSCLEFSLRIQEFIELVRQNKRLD) enclose the CTLH domain. The segment at 314 to 381 (CPVCSRSLNK…QDDKVVCPRT (68 aa)) adopts an RING-Gid-type zinc-finger fold.

In terms of assembly, identified in the CTLH complex that contains GID4, RANBP9 and/or RANBP10, MKLN1, MAEA, RMND5A (or alternatively its paralog RMND5B), GID8, ARMC8, WDR26 and YPEL5. Within this complex, MAEA, RMND5A (or alternatively its paralog RMND5B), GID8, WDR26, and RANBP9 and/or RANBP10 form the catalytic core, while GID4, MKLN1, ARMC8 and YPEL5 have ancillary roles. Interacts with F-actin. Autoubiquitinated as component of the CTLH E3 ubiquitin-protein ligase complex (in vitro). In terms of tissue distribution, detected in embryonic fibroblasts. Detected in macrophages. Detected in heart. liver, spleen and kidney (at protein level).

Its subcellular location is the cytoplasm. It is found in the nucleus. The protein resides in the nucleoplasm. The protein localises to the nucleus matrix. It localises to the cell membrane. Its subcellular location is the cytoskeleton. The enzyme catalyses S-ubiquitinyl-[E2 ubiquitin-conjugating enzyme]-L-cysteine + [acceptor protein]-L-lysine = [E2 ubiquitin-conjugating enzyme]-L-cysteine + N(6)-ubiquitinyl-[acceptor protein]-L-lysine.. Its function is as follows. Core component of the CTLH E3 ubiquitin-protein ligase complex that selectively accepts ubiquitin from UBE2H and mediates ubiquitination and subsequent proteasomal degradation of the transcription factor HBP1. MAEA and RMND5A are both required for catalytic activity of the CTLH E3 ubiquitin-protein ligase complex. MAEA is required for normal cell proliferation. The CTLH E3 ubiquitin-protein ligase complex is not required for the degradation of enzymes involved in gluconeogenesis, such as FBP1. Plays a role in erythroblast enucleation during erythrocyte maturation and in the development of mature macrophages. Mediates the attachment of erythroid cell to mature macrophages; this MAEA-mediated contact inhibits erythroid cell apoptosis. Participates in erythroblastic island formation, which is the functional unit of definitive erythropoiesis. Associates with F-actin to regulate actin distribution in erythroblasts and macrophages. May contribute to nuclear architecture and cells division events. In Mus musculus (Mouse), this protein is E3 ubiquitin-protein transferase MAEA (Maea).